The chain runs to 939 residues: AP-2 complex subunit alpha-2 (939 aa).

Residues 11-12, lysine 43, tyrosine 53, and 57-61 each bind a 1,2-diacyl-sn-glycero-3-phospho-(1D-myo-inositol-3,4,5-trisphosphate); these read RG and KYVCK. The interval 612-681 is disordered; sequence LAKLKKKKGP…AGPPPSSGGS (70 aa). Residues 646 to 667 show a composition bias toward low complexity; it reads PASTSAVSTPSPSADLLGLGAA. Over residues 668–677 the composition is skewed to pro residues; the sequence is PPAPAGPPPS.

The protein belongs to the adaptor complexes large subunit family. Adaptor protein complex 2 (AP-2) is a heterotetramer composed of two large adaptins (alpha-type subunit AP2A1 or AP2A2 and beta-type subunit AP2B1), a medium adaptin (mu-type subunit AP2M1) and a small adaptin (sigma-type subunit AP2S1). Binds EPN1, EPS15, AMPH, SNAP91 and BIN1. Interacts with HIP1. Interacts with DGKD. Interacts with DENND1A, DENND1B and DENND1C. Interacts with FCHO1 and DAB2. Interacts with ATAT1; this interaction is required for efficient alpha-tubulin acetylation by ATAT1. Interacts with KIAA1107. Together with AP2B1 and AP2M1, it interacts with ADAM10; this interaction facilitates ADAM10 endocytosis from the plasma membrane during long-term potentiation in hippocampal neurons. Interacts with CLN3 (via dileucine motif). Interacts with ABCB11; this interaction regulates cell membrane expression of ABCB11 through its internalization in a clathrin-dependent manner and its subsequent degradation. Interacts with Cacfd1. Interacts with DNAJC6. Expressed in the brain (at protein level).

The protein resides in the cell membrane. It is found in the membrane. Its subcellular location is the coated pit. Its function is as follows. Component of the adaptor protein complex 2 (AP-2). Adaptor protein complexes function in protein transport via transport vesicles in different membrane traffic pathways. Adaptor protein complexes are vesicle coat components and appear to be involved in cargo selection and vesicle formation. AP-2 is involved in clathrin-dependent endocytosis in which cargo proteins are incorporated into vesicles surrounded by clathrin (clathrin-coated vesicles, CCVs) which are destined for fusion with the early endosome. The clathrin lattice serves as a mechanical scaffold but is itself unable to bind directly to membrane components. Clathrin-associated adaptor protein (AP) complexes which can bind directly to both the clathrin lattice and to the lipid and protein components of membranes are considered to be the major clathrin adaptors contributing the CCV formation. AP-2 also serves as a cargo receptor to selectively sort the membrane proteins involved in receptor-mediated endocytosis. AP-2 seems to play a role in the recycling of synaptic vesicle membranes from the presynaptic surface. AP-2 recognizes Y-X-X-[FILMV] (Y-X-X-Phi) and [ED]-X-X-X-L-[LI] endocytosis signal motifs within the cytosolic tails of transmembrane cargo molecules. AP-2 may also play a role in maintaining normal post-endocytic trafficking through the ARF6-regulated, non-clathrin pathway. During long-term potentiation in hippocampal neurons, AP-2 is responsible for the endocytosis of ADAM10. The AP-2 alpha subunit binds polyphosphoinositide-containing lipids, positioning AP-2 on the membrane. The AP-2 alpha subunit acts via its C-terminal appendage domain as a scaffolding platform for endocytic accessory proteins. The AP-2 alpha and AP-2 sigma subunits are thought to contribute to the recognition of the [ED]-X-X-X-L-[LI] motif. The protein is AP-2 complex subunit alpha-2 (AP2A2) of Homo sapiens (Human).